The following is a 195-amino-acid chain: Interferon omega-2 (195 aa).

The N-terminal stretch at Met1 to Gly23 is a signal peptide. Cystine bridges form between Cys24–Cys122 and Cys52–Cys162. Asn101 carries an N-linked (GlcNAc...) asparagine glycan.

The protein belongs to the alpha/beta interferon family.

The protein resides in the secreted. In Equus caballus (Horse), this protein is Interferon omega-2.